The sequence spans 143 residues: Large-conductance mechanosensitive channel (143 aa).

Helical transmembrane passes span 19-39 (VGVIIGAAFGGIVSSLVADVI) and 81-101 (GSFLTLTLNFLIVAFVLFLVV).

This sequence belongs to the MscL family. As to quaternary structure, homopentamer.

Its subcellular location is the cell inner membrane. Channel that opens in response to stretch forces in the membrane lipid bilayer. May participate in the regulation of osmotic pressure changes within the cell. The sequence is that of Large-conductance mechanosensitive channel from Rhodopseudomonas palustris (strain HaA2).